Consider the following 163-residue polypeptide: NADH-quinone oxidoreductase subunit I (163 aa).

2 4Fe-4S ferredoxin-type domains span residues 54–84 (LRRYPNGEERCIACKLCEAVCPALAISIESD) and 94–123 (TRYDIDLTKCIFCGFCEEACPVDAIVETHI). Cysteine 64, cysteine 67, cysteine 70, cysteine 74, cysteine 103, cysteine 106, cysteine 109, and cysteine 113 together coordinate [4Fe-4S] cluster.

The protein belongs to the complex I 23 kDa subunit family. In terms of assembly, NDH-1 is composed of 14 different subunits. Subunits NuoA, H, J, K, L, M, N constitute the membrane sector of the complex. [4Fe-4S] cluster is required as a cofactor.

The protein localises to the cell inner membrane. It carries out the reaction a quinone + NADH + 5 H(+)(in) = a quinol + NAD(+) + 4 H(+)(out). NDH-1 shuttles electrons from NADH, via FMN and iron-sulfur (Fe-S) centers, to quinones in the respiratory chain. The immediate electron acceptor for the enzyme in this species is believed to be ubiquinone. Couples the redox reaction to proton translocation (for every two electrons transferred, four hydrogen ions are translocated across the cytoplasmic membrane), and thus conserves the redox energy in a proton gradient. The sequence is that of NADH-quinone oxidoreductase subunit I from Cupriavidus metallidurans (strain ATCC 43123 / DSM 2839 / NBRC 102507 / CH34) (Ralstonia metallidurans).